Consider the following 500-residue polypeptide: Glutelin type-B 5 (500 aa).

The signal sequence occupies residues 1-24 (MATIAFSRLSIYFCVLLLCHGSMA). 2 cysteine pairs are disulfide-bonded: Cys-45/Cys-78 and Cys-121/Cys-310. 2 consecutive Cupin type-1 domains span residues 50–245 (LQAF…LVAK) and 316–465 (LNIE…EQAR).

The protein belongs to the 11S seed storage protein (globulins) family. Hexamer; each subunit is composed of an acidic and a basic chain derived from a single precursor and linked by a disulfide bond.

Seed storage protein. This chain is Glutelin type-B 5 (GLUB5), found in Oryza sativa subsp. japonica (Rice).